The primary structure comprises 317 residues: 17-beta-hydroxysteroid dehydrogenase type 6 (317 aa).

The N-terminal stretch at 1-17 (MWLYLAAFVGLYYLLHW) is a signal peptide. 33 to 57 (FITGCDSGFGNLLARQLDARGLRVL) is an NAD(+) binding site. N-linked (GlcNAc...) asparagine glycosylation occurs at Asn161. Ser164 contacts substrate. Tyr176 acts as the Proton acceptor in catalysis. N-linked (GlcNAc...) asparagine glycans are attached at residues Asn215 and Asn256.

This sequence belongs to the short-chain dehydrogenases/reductases (SDR) family. Detected in liver and prostate (at protein level). Detected in adult liver, lung, brain, placenta, prostate, adrenal gland, testis, mammary gland, spleen, spinal cord and uterus. Detected in caudate nucleus, and at lower levels in amygdala, corpus callosum, hippocampus, substantia nigra and thalamus. Detected in fetal lung, liver and brain.

It is found in the microsome membrane. Its subcellular location is the early endosome membrane. It carries out the reaction all-trans-retinol--[retinol-binding protein] + NAD(+) = all-trans-retinal--[retinol-binding protein] + NADH + H(+). It catalyses the reaction all-trans-retinol + NAD(+) = all-trans-retinal + NADH + H(+). The enzyme catalyses androsterone + NAD(+) = 5alpha-androstan-3,17-dione + NADH + H(+). The catalysed reaction is testosterone + NAD(+) = androst-4-ene-3,17-dione + NADH + H(+). It carries out the reaction 5alpha-androstane-3alpha,17beta-diol + NAD(+) = 17beta-hydroxy-5alpha-androstan-3-one + NADH + H(+). It catalyses the reaction 17beta-estradiol + NAD(+) = estrone + NADH + H(+). The enzyme catalyses 17beta-estradiol + NADP(+) = estrone + NADPH + H(+). The catalysed reaction is 3alpha-hydroxy-5alpha-pregnan-20-one + NAD(+) = 5alpha-pregnane-3,20-dione + NADH + H(+). It carries out the reaction 5alpha-androstane-3beta,17beta-diol + NAD(+) = 17beta-hydroxy-5alpha-androstan-3-one + NADH + H(+). It catalyses the reaction 3beta-hydroxy-5alpha-androstan-17-one + NAD(+) = 5alpha-androstan-3,17-dione + NADH + H(+). NAD-dependent oxidoreductase with broad substrate specificity that shows both oxidative and reductive activity (in vitro). Has 17-beta-hydroxysteroid dehydrogenase activity towards various steroids (in vitro). Converts 5-alpha-androstan-3-alpha,17-beta-diol to androsterone and estradiol to estrone (in vitro). Has 3-alpha-hydroxysteroid dehydrogenase activity towards androsterone (in vitro). Has retinol dehydrogenase activity towards all-trans-retinol (in vitro). Can convert androsterone to epi-androsterone. Androsterone is first oxidized to 5-alpha-androstane-3,17-dione and then reduced to epi-andosterone. Can act on both C-19 and C-21 3-alpha-hydroxysteroids. The sequence is that of 17-beta-hydroxysteroid dehydrogenase type 6 (HSD17B6) from Homo sapiens (Human).